Here is a 919-residue protein sequence, read N- to C-terminus: Isoleucine--tRNA ligase (919 aa).

The 'HIGH' region motif lies at 57–67; it reads PYANGNIHIGH. Position 569 (glutamate 569) interacts with L-isoleucyl-5'-AMP. Residues 610–614 carry the 'KMSKS' region motif; the sequence is KMSKS. An ATP-binding site is contributed by lysine 613. Zn(2+) contacts are provided by cysteine 896, cysteine 899, cysteine 911, and cysteine 914.

Belongs to the class-I aminoacyl-tRNA synthetase family. IleS type 1 subfamily. Monomer. The cofactor is Zn(2+).

The protein localises to the cytoplasm. The catalysed reaction is tRNA(Ile) + L-isoleucine + ATP = L-isoleucyl-tRNA(Ile) + AMP + diphosphate. In terms of biological role, catalyzes the attachment of isoleucine to tRNA(Ile). As IleRS can inadvertently accommodate and process structurally similar amino acids such as valine, to avoid such errors it has two additional distinct tRNA(Ile)-dependent editing activities. One activity is designated as 'pretransfer' editing and involves the hydrolysis of activated Val-AMP. The other activity is designated 'posttransfer' editing and involves deacylation of mischarged Val-tRNA(Ile). The chain is Isoleucine--tRNA ligase from Aliarcobacter butzleri (strain RM4018) (Arcobacter butzleri).